Reading from the N-terminus, the 175-residue chain is Small ribosomal subunit protein bS16 (175 aa).

It belongs to the bacterial ribosomal protein bS16 family.

The protein is Small ribosomal subunit protein bS16 of Cytophaga hutchinsonii (strain ATCC 33406 / DSM 1761 / CIP 103989 / NBRC 15051 / NCIMB 9469 / D465).